Here is a 184-residue protein sequence, read N- to C-terminus: UPF0149 protein PputW619_5026 (184 aa).

The protein belongs to the UPF0149 family.

The polypeptide is UPF0149 protein PputW619_5026 (Pseudomonas putida (strain W619)).